Here is a 365-residue protein sequence, read N- to C-terminus: Dehydroprecondylocarpine acetate synthase (365 aa).

Cys105, Cys108, Cys111, and Cys119 together coordinate Zn(2+). N-linked (GlcNAc...) asparagine glycosylation is found at Asn142 and Asn147. The NADP(+) site is built by Leu194, Gly196, Leu197, Ser216, Thr217, Thr218, Lys221, Leu279, Ala281, Ser303, Ala305, and Arg350.

This sequence belongs to the zinc-containing alcohol dehydrogenase family. Homodimer. Interaction with catharanthine synthase (CS) and tabersonine synthase (TS). Requires Zn(2+) as cofactor.

The protein localises to the cytoplasm. It localises to the cytosol. The catalysed reaction is dihydroprecondylocarpine acetate + NADP(+) = precondylocarpine acetate + NADPH + H(+). It participates in alkaloid biosynthesis. Its function is as follows. Component of the seco-iridoid and derivatives monoterpenoid indole alkaloids (MIAs, e.g. vinblastine, catharanthine, tabersonine, vincadifformine, vindoline, vincristine, quinine and strychnine) biosynthesis pathway. Catalyzes the non-canonical 1,4-reduction of an alpha,beta-unsaturated iminium moiety; by contrast with the classic alcohol dehydrogenase mechanism, this reaction does not require a catalytic zinc or proton relay. Converts precondylocarpine acetate to dihydroprecondylocarpine acetate, that is spontaneously converted into dehydrosecodine intermediate, precursor of angryline. May also trigger the non-stereoselective 1,4-reduction reaction at C15 of dehydrosecodine leading to the production of secodine, a precursor of vincadifformine. In Catharanthus roseus (Madagascar periwinkle), this protein is Dehydroprecondylocarpine acetate synthase.